A 126-amino-acid polypeptide reads, in one-letter code: Large ribosomal subunit protein bL12 (126 aa).

It belongs to the bacterial ribosomal protein bL12 family. In terms of assembly, homodimer. Part of the ribosomal stalk of the 50S ribosomal subunit. Forms a multimeric L10(L12)X complex, where L10 forms an elongated spine to which 2 to 4 L12 dimers bind in a sequential fashion. Binds GTP-bound translation factors.

In terms of biological role, forms part of the ribosomal stalk which helps the ribosome interact with GTP-bound translation factors. Is thus essential for accurate translation. The chain is Large ribosomal subunit protein bL12 from Streptococcus pyogenes serotype M28 (strain MGAS6180).